The chain runs to 223 residues: uncharacterized protein (223 aa).

The next 4 helical transmembrane spans lie at leucine 22 to valine 42, glycine 59 to isoleucine 79, isoleucine 85 to methionine 105, and methionine 164 to phenylalanine 184.

The protein belongs to the Rht family.

Its subcellular location is the cell membrane. This is an uncharacterized protein from Escherichia coli (strain K12).